Reading from the N-terminus, the 310-residue chain is Transaldolase (310 aa).

Lysine 124 functions as the Schiff-base intermediate with substrate in the catalytic mechanism.

It belongs to the transaldolase family. Type 1 subfamily. As to quaternary structure, homodimer.

Its subcellular location is the cytoplasm. It carries out the reaction D-sedoheptulose 7-phosphate + D-glyceraldehyde 3-phosphate = D-erythrose 4-phosphate + beta-D-fructose 6-phosphate. The protein operates within carbohydrate degradation; pentose phosphate pathway; D-glyceraldehyde 3-phosphate and beta-D-fructose 6-phosphate from D-ribose 5-phosphate and D-xylulose 5-phosphate (non-oxidative stage): step 2/3. In terms of biological role, transaldolase is important for the balance of metabolites in the pentose-phosphate pathway. In Teredinibacter turnerae (strain ATCC 39867 / T7901), this protein is Transaldolase.